The following is a 283-amino-acid chain: 2-dehydro-3-deoxyphosphooctonate aldolase (283 aa).

The protein belongs to the KdsA family.

The protein resides in the cytoplasm. The catalysed reaction is D-arabinose 5-phosphate + phosphoenolpyruvate + H2O = 3-deoxy-alpha-D-manno-2-octulosonate-8-phosphate + phosphate. It participates in carbohydrate biosynthesis; 3-deoxy-D-manno-octulosonate biosynthesis; 3-deoxy-D-manno-octulosonate from D-ribulose 5-phosphate: step 2/3. Its pathway is bacterial outer membrane biogenesis; lipopolysaccharide biosynthesis. The chain is 2-dehydro-3-deoxyphosphooctonate aldolase from Vibrio campbellii (strain ATCC BAA-1116).